A 115-amino-acid polypeptide reads, in one-letter code: Protein TrbA (115 aa).

4 consecutive transmembrane segments (helical) span residues 5–25 (YLKMFTGVVLLIFVIIAGYFF), 39–59 (LVFLVVNIACLYVLTASLWFL), 60–80 (CGAIMSQGAALVVSIVAAALP), and 91–111 (IFICIMLSSVWSGVMWFFIRG).

It is found in the cell membrane. This Escherichia coli (strain K12) protein is Protein TrbA (trbA).